A 603-amino-acid polypeptide reads, in one-letter code: Glutathione-regulated potassium-efflux system protein KefB (603 aa).

A run of 13 helical transmembrane segments spans residues 5 to 25, 29 to 49, 55 to 75, 87 to 107, 115 to 135, 152 to 172, 180 to 202, 207 to 227, 230 to 250, 268 to 288, 291 to 311, 326 to 346, and 356 to 376; these read ALLT…PIAA, IGAV…GLGF, AILH…GLEL, IFGV…GALY, SALI…LQLM, VLLF…ILAG, WERI…YLVR, FIAA…LVLG, LFME…GILL, GLLL…GILY, IVKI…VLYF, FAGV…AAAS, and PLLL…MQLI. Residues 400 to 521 enclose the RCK N-terminal domain; that stretch reads EPQVIVVGFG…VRHFSRETFS (122 aa).

This sequence belongs to the monovalent cation:proton antiporter 2 (CPA2) transporter (TC 2.A.37) family. KefB subfamily. As to quaternary structure, interacts with the regulatory subunit KefG.

It localises to the cell inner membrane. In terms of biological role, pore-forming subunit of a potassium efflux system that confers protection against electrophiles. Catalyzes K(+)/H(+) antiport. The protein is Glutathione-regulated potassium-efflux system protein KefB of Pectobacterium carotovorum subsp. carotovorum (strain PC1).